A 609-amino-acid chain; its full sequence is Replication protein A 70 kDa DNA-binding subunit (609 aa).

The tract at residues 113 to 163 is disordered; it reads GNPQPYNDGQPQPAAPAPASAPAPAPSKLQNNSAPPPSMNRGTSKLFGGGS. Residues 125-137 show a composition bias toward pro residues; it reads PAAPAPASAPAPA. Positions 188–272 form a DNA-binding region, OB; the sequence is WTVRARVTNK…VKNDYEMTFN (85 aa). The C4-type zinc finger occupies 472–494; it reads CPSQDCNKKVIDQQNGLFRCEKC.

This sequence belongs to the replication factor A protein 1 family. Component of the heterotrimeric canonical replication protein A complex (RPA). Interacts with rpain-a.

Its subcellular location is the nucleus. It localises to the PML body. Functionally, as part of the heterotrimeric replication protein A complex (RPA/RP-A), binds and stabilizes single-stranded DNA intermediates, that form during DNA replication or upon DNA stress. It prevents their reannealing and in parallel, recruits and activates different proteins and complexes involved in DNA metabolism. Thereby, it plays an essential role both in DNA replication and the cellular response to DNA damage. The sequence is that of Replication protein A 70 kDa DNA-binding subunit (rpa1) from Xenopus laevis (African clawed frog).